An 82-amino-acid chain; its full sequence is Exodeoxyribonuclease 7 small subunit (82 aa).

The protein belongs to the XseB family. As to quaternary structure, heterooligomer composed of large and small subunits.

Its subcellular location is the cytoplasm. The catalysed reaction is Exonucleolytic cleavage in either 5'- to 3'- or 3'- to 5'-direction to yield nucleoside 5'-phosphates.. In terms of biological role, bidirectionally degrades single-stranded DNA into large acid-insoluble oligonucleotides, which are then degraded further into small acid-soluble oligonucleotides. The chain is Exodeoxyribonuclease 7 small subunit from Mycobacterium avium (strain 104).